Reading from the N-terminus, the 266-residue chain is Energy-coupling factor transporter transmembrane protein EcfT 1 (266 aa).

The next 5 helical transmembrane spans lie at 33-53 (IGIL…LFTL), 73-93 (LIWL…GGTI), 107-127 (LLNG…STVI), 152-172 (VPVN…PTLM), and 243-263 (HFGD…LVIL).

This sequence belongs to the energy-coupling factor EcfT family. In terms of assembly, forms a stable energy-coupling factor (ECF) transporter complex composed of 2 membrane-embedded substrate-binding proteins (S component), 2 ATP-binding proteins (A component) and 2 transmembrane proteins (T component). May be able to interact with more than 1 S component at a time.

The protein resides in the cell membrane. Functionally, transmembrane (T) component of an energy-coupling factor (ECF) ABC-transporter complex. Unlike classic ABC transporters this ECF transporter provides the energy necessary to transport a number of different substrates. This Listeria monocytogenes serotype 1/2a (strain 08-5578) protein is Energy-coupling factor transporter transmembrane protein EcfT 1.